A 314-amino-acid polypeptide reads, in one-letter code: Oxalate oxidoreductase subunit beta (314 aa).

The [4Fe-4S] cluster site is built by cysteine 24, cysteine 27, cysteine 52, and cysteine 225.

In terms of assembly, dimer of heterotrimer of one alpha, one beta and one delta subunit. Requires [4Fe-4S] cluster as cofactor.

The catalysed reaction is oxidized 2[4Fe-4S]-[ferredoxin] + oxalate = reduced 2[4Fe-4S]-[ferredoxin] + 2 CO2. Its function is as follows. Catalyzes the anaerobic oxidation of oxalate using a broad range of electron acceptors, including ferredoxin and the nickel-dependent carbon monoxide dehydrogenase. Does not require coenzyme A as cosubstrate. Enables anaerobic growth on oxalate which is used as energy source by the bacteria. The polypeptide is Oxalate oxidoreductase subunit beta (Moorella thermoacetica (strain ATCC 39073 / JCM 9320)).